A 151-amino-acid polypeptide reads, in one-letter code: Chaperonin GroEL (151 aa).

Residue 41-45 participates in ATP binding; the sequence is DGTTT.

Belongs to the chaperonin (HSP60) family. Forms a cylinder of 14 subunits composed of two heptameric rings stacked back-to-back. Interacts with the co-chaperonin GroES.

The protein resides in the cytoplasm. The catalysed reaction is ATP + H2O + a folded polypeptide = ADP + phosphate + an unfolded polypeptide.. Its function is as follows. Together with its co-chaperonin GroES, plays an essential role in assisting protein folding. The GroEL-GroES system forms a nano-cage that allows encapsulation of the non-native substrate proteins and provides a physical environment optimized to promote and accelerate protein folding. In Mycobacterium marinum, this protein is Chaperonin GroEL.